A 489-amino-acid chain; its full sequence is UDP-N-acetylmuramate--L-alanine ligase (489 aa).

Position 130–136 (G130–S136) interacts with ATP.

The protein belongs to the MurCDEF family.

It is found in the cytoplasm. It catalyses the reaction UDP-N-acetyl-alpha-D-muramate + L-alanine + ATP = UDP-N-acetyl-alpha-D-muramoyl-L-alanine + ADP + phosphate + H(+). It functions in the pathway cell wall biogenesis; peptidoglycan biosynthesis. Its function is as follows. Cell wall formation. This is UDP-N-acetylmuramate--L-alanine ligase from Corynebacterium efficiens (strain DSM 44549 / YS-314 / AJ 12310 / JCM 11189 / NBRC 100395).